We begin with the raw amino-acid sequence, 92 residues long: DNA-directed RNA polymerase subunit Rpo11 (92 aa).

Belongs to the archaeal Rpo11/eukaryotic RPB11/RPC19 RNA polymerase subunit family. As to quaternary structure, part of the RNA polymerase complex.

Its subcellular location is the cytoplasm. The catalysed reaction is RNA(n) + a ribonucleoside 5'-triphosphate = RNA(n+1) + diphosphate. DNA-dependent RNA polymerase (RNAP) catalyzes the transcription of DNA into RNA using the four ribonucleoside triphosphates as substrates. This Halorubrum lacusprofundi (strain ATCC 49239 / DSM 5036 / JCM 8891 / ACAM 34) protein is DNA-directed RNA polymerase subunit Rpo11.